Here is a 47-residue protein sequence, read N- to C-terminus: Photosystem II reaction center protein K (47 aa).

A propeptide spanning residues M1 to A10 is cleaved from the precursor. Residues F19 to V39 form a helical membrane-spanning segment.

This sequence belongs to the PsbK family. In terms of assembly, PSII is composed of 1 copy each of membrane proteins PsbA, PsbB, PsbC, PsbD, PsbE, PsbF, PsbH, PsbI, PsbJ, PsbK, PsbL, PsbM, PsbT, PsbX, PsbY, PsbZ, Psb30/Ycf12, peripheral proteins PsbO, CyanoQ (PsbQ), PsbU, PsbV and a large number of cofactors. It forms dimeric complexes.

The protein resides in the cellular thylakoid membrane. One of the components of the core complex of photosystem II (PSII). PSII is a light-driven water:plastoquinone oxidoreductase that uses light energy to abstract electrons from H(2)O, generating O(2) and a proton gradient subsequently used for ATP formation. It consists of a core antenna complex that captures photons, and an electron transfer chain that converts photonic excitation into a charge separation. The sequence is that of Photosystem II reaction center protein K from Parasynechococcus marenigrum (strain WH8102).